A 472-amino-acid chain; its full sequence is Pyruvate kinase (472 aa).

Position 33 (arginine 33) interacts with substrate. Residues asparagine 35, serine 37, and aspartate 67 each contribute to the K(+) site. Asparagine 35–histidine 38 contributes to the ATP binding site. ATP-binding residues include arginine 74 and lysine 155. Glutamate 220 serves as a coordination point for Mg(2+). Residues glycine 243, aspartate 244, and threonine 276 each contribute to the substrate site. Aspartate 244 serves as a coordination point for Mg(2+).

The protein belongs to the pyruvate kinase family. As to quaternary structure, homotetramer. It depends on Mg(2+) as a cofactor. K(+) is required as a cofactor.

The enzyme catalyses pyruvate + ATP = phosphoenolpyruvate + ADP + H(+). It functions in the pathway carbohydrate degradation; glycolysis; pyruvate from D-glyceraldehyde 3-phosphate: step 5/5. The polypeptide is Pyruvate kinase (pyk) (Mycobacterium tuberculosis (strain CDC 1551 / Oshkosh)).